We begin with the raw amino-acid sequence, 362 residues long: Aminomethyltransferase (362 aa).

It belongs to the GcvT family. As to quaternary structure, the glycine cleavage system is composed of four proteins: P, T, L and H.

It catalyses the reaction N(6)-[(R)-S(8)-aminomethyldihydrolipoyl]-L-lysyl-[protein] + (6S)-5,6,7,8-tetrahydrofolate = N(6)-[(R)-dihydrolipoyl]-L-lysyl-[protein] + (6R)-5,10-methylene-5,6,7,8-tetrahydrofolate + NH4(+). Functionally, the glycine cleavage system catalyzes the degradation of glycine. The protein is Aminomethyltransferase of Listeria monocytogenes serotype 4a (strain HCC23).